The chain runs to 307 residues: Epimerase family protein ML0860 (307 aa).

Belongs to the NAD(P)-dependent epimerase/dehydratase family. SDR39U1 subfamily.

This Mycobacterium leprae (strain TN) protein is Epimerase family protein ML0860.